The primary structure comprises 159 residues: Protein Smg homolog (159 aa).

This sequence belongs to the Smg family.

In Vibrio parahaemolyticus serotype O3:K6 (strain RIMD 2210633), this protein is Protein Smg homolog.